A 313-amino-acid chain; its full sequence is 3'-5' exoribonuclease YhaM (313 aa).

Positions 22–90 form a DNA-binding region, OB; the sequence is SSVKGTASNG…QLKIRQIRQA (69 aa). In terms of domain architecture, HD spans 163–279; it reads HVVSMLRLAK…LHQIDLMDAS (117 aa).

This sequence belongs to the YhaM family.

In terms of biological role, shows a 3'-5' exoribonuclease activity. This chain is 3'-5' exoribonuclease YhaM, found in Listeria monocytogenes serovar 1/2a (strain ATCC BAA-679 / EGD-e).